We begin with the raw amino-acid sequence, 160 residues long: Glucagon-1 (160 aa).

An N-terminal signal peptide occupies residues M1–A22. 3 consecutive propeptides follow at residues S23–S40, G74–Q79, and D116–D127. The tract at residues K112–E132 is disordered.

The protein belongs to the glucagon family.

The protein localises to the secreted. Promotes hydrolysis of glycogen and lipids, and raises the blood sugar level. In Petromyzon marinus (Sea lamprey), this protein is Glucagon-1 (gcg1).